The primary structure comprises 164 residues: I-Kappa-B like protein F1 (164 aa).

ANK repeat units lie at residues 57 to 89 (HGRQ…NINA), 94 to 124 (TGNT…DLGA), and 128 to 157 (QQET…AYNN).

The protein belongs to the polydnaviridae I-Kappa-B-like protein family.

Its function is as follows. Suppresses the host immune response through NF-kappa-B inactivation. Possesses ankyrin repeat domains required for NF-kappa-B binding but lacks the regulatory regions required for dissociation from NF-kappa-B and degradation. Therefore, prevents host NF-kappa-B release and subsequent activation. In Microplitis demolitor bracovirus (isolate Webb) (MdBV), this protein is I-Kappa-B like protein F1 (F2).